An 846-amino-acid polypeptide reads, in one-letter code: MSKSFQQSSLGRDSQGHGRDLSAAGIGLLAAATQSLSMPASLGRMNQGTARLASLMNLGMSSSLNQQGAHSALSSASTSSHNLQSIFNIGSRGPLPLSSQHRGDTDQASNILASFGLSARDLDELSRYPEDKITPENLPQILLQLKRRRTEEGPTLSYGRDGRSATREPPYRVPRDDWEEKRHFRRDSFDDRGPSLNPVLDYDHGSRSQESGYYDRMDYEDDRLRDGERCRDDSFFGETSHNYHKFDSEYERMGRGPGPLQERSLFEKKRGAPPSSNIEDFHGLLPKGYPHLCSICDLPVHSNKEWSQHINGASHSRRCQLLLEIYPEWNPDNDTGHTMGDPFMLQQSTNPAPGILGPPPPSFHLGGPAVGPRGNLGAGNGNLQGPRHMQKGRVETSRVVHIMDFQRGKNLRYQLLQLVEPFGVISNHLILNKINEAFIEMATTEDAQAAVDYYTTTPALVFGKPVRVHLSQKYKRIKKPEGKPDQKFDQKQELGRVIHLSNLPHSGYSDSAVLKLAEPYGKIKNYILMRMKSQAFIEMETREDAMAMVDHCLKKALWFQGRCVKVDLSEKYKKLVLRIPNRGIDLLKKDKSRKRSYSPDGKESPSDKKSKTDAQKTESPAEGKEQEEKSGEDGEKDTKDDQTEQEPSMLLESEDELLVDEEEAAALLESGSSVGDETDLANLGDVSSDGKKEPSDKAVKKDPSASATSKKKLKKVDKIEELDQENEAALENGIKNEENTEPGAESAENADDPNKDTSENADGQNDENKEDYTIPDEYRIGPYQPNVPVGIDYVIPKTGFYCKLCSLFYTNEEVAKNTHCSSLPHYQKLKKFLNKLAEERRQKKET.

At S2 the chain carries N-acetylserine. An N6-acetyllysine; alternate modification is found at K3. A Glycyl lysine isopeptide (Lys-Gly) (interchain with G-Cter in SUMO2); alternate cross-link involves residue K3. Residues S4, S9, S14, S22, S41, S118, and S126 each carry the phosphoserine modification. Residues K132 and K146 each participate in a glycyl lysine isopeptide (Lys-Gly) (interchain with G-Cter in SUMO2) cross-link. Disordered stretches follow at residues 147-174 (RRRT…YRVP) and 187-213 (DSFD…ESGY). T150 bears the Phosphothreonine mark. At S157 the chain carries Phosphoserine. At Y158 the chain carries Phosphotyrosine. Positions 160-174 (RDGRSATREPPYRVP) are enriched in basic and acidic residues. S164, S188, and S195 each carry phosphoserine. Basic and acidic residues predominate over residues 201–213 (DYDHGSRSQESGY). A Phosphotyrosine modification is found at Y202. Residues S206, S208, and S211 each carry the phosphoserine modification. Y219 carries the post-translational modification Phosphotyrosine. A Phosphoserine modification is found at S234. Residue K245 forms a Glycyl lysine isopeptide (Lys-Gly) (interchain with G-Cter in SUMO2) linkage. S264 carries the phosphoserine modification. K269 is covalently cross-linked (Glycyl lysine isopeptide (Lys-Gly) (interchain with G-Cter in SUMO2)). S275 bears the Phosphoserine mark. The disordered stretch occupies residues 342 to 394 (PFMLQQSTNPAPGILGPPPPSFHLGGPAVGPRGNLGAGNGNLQGPRHMQKGRV). Residues 398–473 (RVVHIMDFQR…KPVRVHLSQK (76 aa)) form the RRM 1 domain. Residues K478, K487, and K491 each participate in a glycyl lysine isopeptide (Lys-Gly) (interchain with G-Cter in SUMO2) cross-link. The 76-residue stretch at 496–571 (RVIHLSNLPH…RCVKVDLSEK (76 aa)) folds into the RRM 2 domain. S509 and S511 each carry phosphoserine. K515 is covalently cross-linked (Glycyl lysine isopeptide (Lys-Gly) (interchain with G-Cter in SUMO2)). An N6-acetyllysine; alternate modification is found at K522. K522 participates in a covalent cross-link: Glycyl lysine isopeptide (Lys-Gly) (interchain with G-Cter in SUMO2); alternate. S533 bears the Phosphoserine mark. Glycyl lysine isopeptide (Lys-Gly) (interchain with G-Cter in SUMO2) cross-links involve residues K554 and K555. K571 carries the post-translational modification N6-acetyllysine. A disordered region spans residues 588–779 (KKDKSRKRSY…EDYTIPDEYR (192 aa)). A phosphoserine mark is found at S596, S598, S604, and S606. Residues 600-642 (DGKESPSDKKSKTDAQKTESPAEGKEQEEKSGEDGEKDTKDDQ) show a composition bias toward basic and acidic residues. Glycyl lysine isopeptide (Lys-Gly) (interchain with G-Cter in SUMO2) cross-links involve residues K616 and K629. The span at 652-664 (ESEDELLVDEEEA) shows a compositional bias: acidic residues. A phosphoserine mark is found at S653, S670, S672, and S673. Positions 665 to 675 (AALLESGSSVG) are enriched in low complexity. T678 carries the post-translational modification Phosphothreonine. S688 carries the post-translational modification Phosphoserine. Basic and acidic residues predominate over residues 688-703 (SDGKKEPSDKAVKKDP). The Nuclear localization signal motif lies at 709–717 (SKKKLKKVD). Residues K718 and K735 each participate in a glycyl lysine isopeptide (Lys-Gly) (interchain with G-Cter in SUMO2) cross-link. At T740 the chain carries Phosphothreonine. S746 and S758 each carry phosphoserine. Over residues 766-779 (DENKEDYTIPDEYR) the composition is skewed to basic and acidic residues. K769 is covalently cross-linked (Glycyl lysine isopeptide (Lys-Gly) (interchain with G-Cter in SUMO2)). Residues 800 to 831 (FYCKLCSLFYTNEEVAKNTHCSSLPHYQKLKK) form a Matrin-type zinc finger. Residue K835 is modified to N6-acetyllysine; alternate. K835 participates in a covalent cross-link: Glycyl lysine isopeptide (Lys-Gly) (interchain with G-Cter in SUMO2); alternate.

In terms of assembly, part of a complex consisting of SFPQ, NONO and MATR3. Interacts with AGO1 and AGO2. Part of a complex composed at least of ASH2L, EMSY, HCFC1, HSPA8, CCAR2, MATR3, MKI67, RBBP5, TUBB2A, WDR5 and ZNF335; this complex may have a histone H3-specific methyltransferase activity. Interacts with TARDBP. Part of the HDP-RNP complex composed of at least HEXIM1, PRKDC, XRCC5, XRCC6, paraspeckle proteins (SFPQ, NONO, PSPC1, RBM14, and MATR3) and NEAT1 RNA. Interacts with FUS. Interacts with IGF2BP1. Interacts with IGF2BP2 and IGF2BP3. Interacts with RBPMS.

It is found in the nucleus matrix. Functionally, may play a role in transcription or may interact with other nuclear matrix proteins to form the internal fibrogranular network. In association with the SFPQ-NONO heteromer may play a role in nuclear retention of defective RNAs. Plays a role in the regulation of DNA virus-mediated innate immune response by assembling into the HDP-RNP complex, a complex that serves as a platform for IRF3 phosphorylation and subsequent innate immune response activation through the cGAS-STING pathway. Binds to N6-methyladenosine (m6A)-containing mRNAs and contributes to MYC stability by binding to m6A-containing MYC mRNAs. May bind to specific miRNA hairpins. This is Matrin-3 (Matr3) from Mus musculus (Mouse).